Reading from the N-terminus, the 778-residue chain is Beta-phellandrene synthase (neryl-diphosphate-cyclizing), chloroplastic (778 aa).

The N-terminal 36 residues, 1-36 (MIVGYRSTIITLSHPKLGNGKTISSNAIFQRSCRVR), are a transit peptide targeting the chloroplast. Mg(2+)-binding residues include aspartate 531, asparagine 676, and glutamate 684. The DDXXD motif motif lies at 531–535 (DDHFE).

The protein belongs to the terpene synthase family. Tpse subfamily. It depends on Mg(2+) as a cofactor. Trichomes.

The protein localises to the plastid. The protein resides in the chloroplast. The enzyme catalyses neryl diphosphate = beta-phellandrene + diphosphate. Functionally, monoterpene synthase catalyzing the production of beta-phellandrene from neryl diphosphate. Also produces lower amounts of delta-2-carene, alpha-phellandrene and limonene. When incubated in vitro with geranyl diphosphate, catalyzes the formation of acyclic myrcene and ocimene as major products in addition to beta-phellandrene. This chain is Beta-phellandrene synthase (neryl-diphosphate-cyclizing), chloroplastic (PHS1), found in Solanum lycopersicum (Tomato).